We begin with the raw amino-acid sequence, 138 residues long: Large ribosomal subunit protein uL16 (138 aa).

Over residues 1–13 (MLQPARRKYRKEQ) the composition is skewed to basic residues. Positions 1–22 (MLQPARRKYRKEQKGRNTGIAT) are disordered.

This sequence belongs to the universal ribosomal protein uL16 family. Part of the 50S ribosomal subunit.

Binds 23S rRNA and is also seen to make contacts with the A and possibly P site tRNAs. The protein is Large ribosomal subunit protein uL16 of Delftia acidovorans (strain DSM 14801 / SPH-1).